We begin with the raw amino-acid sequence, 903 residues long: Protein translocase subunit SecA (903 aa).

ATP-binding positions include glutamine 87, 105–109 (GEGKT), and aspartate 513. Basic and acidic residues predominate over residues 840-853 (MEAQRRAQAEEAAR). A disordered region spans residues 840 to 903 (MEAQRRAQAE…KYKQCHGQIN (64 aa)). Zn(2+) is bound by residues cysteine 887, cysteine 889, cysteine 898, and histidine 899.

It belongs to the SecA family. As to quaternary structure, monomer and homodimer. Part of the essential Sec protein translocation apparatus which comprises SecA, SecYEG and auxiliary proteins SecDF-YajC and YidC. The cofactor is Zn(2+).

It is found in the cell inner membrane. Its subcellular location is the cytoplasm. The enzyme catalyses ATP + H2O + cellular proteinSide 1 = ADP + phosphate + cellular proteinSide 2.. Functionally, part of the Sec protein translocase complex. Interacts with the SecYEG preprotein conducting channel. Has a central role in coupling the hydrolysis of ATP to the transfer of proteins into and across the cell membrane, serving both as a receptor for the preprotein-SecB complex and as an ATP-driven molecular motor driving the stepwise translocation of polypeptide chains across the membrane. This chain is Protein translocase subunit SecA, found in Vibrio cholerae serotype O1 (strain M66-2).